Consider the following 226-residue polypeptide: V-type proton ATPase subunit E 1 (226 aa).

N-acetylalanine is present on Ala-2. Tyr-56 is subject to Phosphotyrosine.

This sequence belongs to the V-ATPase E subunit family. As to quaternary structure, V-ATPase is a heteromultimeric enzyme made up of two complexes: the ATP-hydrolytic V1 complex and the proton translocation V0 complex. The V1 complex consists of three catalytic AB heterodimers that form a heterohexamer, three peripheral stalks each consisting of EG heterodimers, one central rotor including subunits D and F, and the regulatory subunits C and H. The proton translocation complex V0 consists of the proton transport subunit a, a ring of proteolipid subunits c9c'', rotary subunit d, subunits e and f, and the accessory subunits ATP6AP1/Ac45 and ATP6AP2/PRR. Interacts with RABL2/RABL2A; binds preferentially to GTP-bound RABL2. Interacts with ALDOC. Interacts with RAB11B. Expressed in brain (at protein level).

The protein localises to the apical cell membrane. It is found in the cytoplasmic vesicle. It localises to the secretory vesicle. The protein resides in the synaptic vesicle membrane. Its subcellular location is the clathrin-coated vesicle membrane. In terms of biological role, subunit of the V1 complex of vacuolar(H+)-ATPase (V-ATPase), a multisubunit enzyme composed of a peripheral complex (V1) that hydrolyzes ATP and a membrane integral complex (V0) that translocates protons. V-ATPase is responsible for acidifying and maintaining the pH of intracellular compartments and in some cell types, is targeted to the plasma membrane, where it is responsible for acidifying the extracellular environment. This Rattus norvegicus (Rat) protein is V-type proton ATPase subunit E 1 (Atp6v1e1).